The primary structure comprises 489 residues: Cytochrome P450 monooxygenase AMT3 (489 aa).

A helical membrane pass occupies residues 292-312; it reads LFMVAGTETTITALSGLVFLL. Cysteine 436 provides a ligand contact to heme.

It belongs to the cytochrome P450 family. Heme serves as cofactor.

It is found in the membrane. Its pathway is mycotoxin biosynthesis. Cytochrome P450 monooxygenase; part of the gene clusters that mediate the biosynthesis of AM-toxins, host-selective toxins (HSTs) causing Alternaria blotch on apple, a worldwide distributed disease. AM-toxins are cyclic depsipeptides containing the 3 residues 2-hydroxy-isovaleric acid (2-HIV), dehydroalanine, L-alanine which are common for all 3 AM-toxins I to III. The fourth precursor is L-alpha-amino-methoxyphenyl-valeric acid (L-Amv) for AM-toxin I, L-alpha-amino-phenyl-valeric acid (L-Apv) for AM-toxin II, and L-alpha-amino-hydroxyphenyl-valeric acid (L-Ahv) for AM-toxin III. AM-toxins have two target sites for affecting susceptible apple cells; they cause invagination of the plasma membrane and electrolyte loss and chloroplast disorganization. The non-ribosomal peptide synthetase AMT1 contains 4 catalytic modules and is responsible for activation of each residue in AM-toxin. The aldo-keto reductase AMT2 catalyzes the conversion of 2-keto-isovaleric acid (2-KIV) to 2-hydroxy-isovaleric acid (2-HIV), one of the precursor residues incorporated by AMT1 during AM-toxin biosynthesis, by reduction of its ketone to an alcohol. The cytochrome P450 monooxygenase AMT3 and the thioesterase AMT4 are also important for AM-toxin production, but their exact function within the AM-toxin biosynthesis are not known yet. Up to 21 proteins (including AMT1 to AMT4) are predicted to be involved in AM-toxin biosynthesis since their expression ishighly up-regulated in AM-toxin-producing cultures. This chain is Cytochrome P450 monooxygenase AMT3, found in Alternaria alternata (Alternaria rot fungus).